Here is a 38-residue protein sequence, read N- to C-terminus: Photosystem II reaction center protein L (38 aa).

Residues 17-37 traverse the membrane as a helical segment; it reads SLYWGLLLIFVLAVLFSNYFF.

This sequence belongs to the PsbL family. PSII is composed of 1 copy each of membrane proteins PsbA, PsbB, PsbC, PsbD, PsbE, PsbF, PsbH, PsbI, PsbJ, PsbK, PsbL, PsbM, PsbT, PsbX, PsbY, PsbZ, Psb30/Ycf12, at least 3 peripheral proteins of the oxygen-evolving complex and a large number of cofactors. It forms dimeric complexes.

Its subcellular location is the plastid. The protein localises to the chloroplast thylakoid membrane. Functionally, one of the components of the core complex of photosystem II (PSII). PSII is a light-driven water:plastoquinone oxidoreductase that uses light energy to abstract electrons from H(2)O, generating O(2) and a proton gradient subsequently used for ATP formation. It consists of a core antenna complex that captures photons, and an electron transfer chain that converts photonic excitation into a charge separation. This subunit is found at the monomer-monomer interface and is required for correct PSII assembly and/or dimerization. This is Photosystem II reaction center protein L from Gnetum gnemon (Spanish joint-fir).